A 223-amino-acid polypeptide reads, in one-letter code: Arginine kinase (223 aa).

In terms of domain architecture, Phosphagen kinase C-terminal spans 56 to 222 (FVISTRVRLI…LELIKIEKEM (167 aa)). ATP contacts are provided by residues 59-63 (STRVR) and H68. C141 lines the L-arginine pocket. Residues 150 to 154 (RASVH) and 175 to 180 (RGTRGE) contribute to the ATP site. Residue E180 participates in L-arginine binding.

This sequence belongs to the ATP:guanido phosphotransferase family.

The catalysed reaction is L-arginine + ATP = N(omega)-phospho-L-arginine + ADP + H(+). The polypeptide is Arginine kinase (Chionoecetes opilio (Atlantic snow crab)).